The chain runs to 222 residues: Probable transaldolase (222 aa).

K91 serves as the catalytic Schiff-base intermediate with substrate.

The protein belongs to the transaldolase family. Type 3B subfamily.

It is found in the cytoplasm. It carries out the reaction D-sedoheptulose 7-phosphate + D-glyceraldehyde 3-phosphate = D-erythrose 4-phosphate + beta-D-fructose 6-phosphate. Its pathway is carbohydrate degradation; pentose phosphate pathway; D-glyceraldehyde 3-phosphate and beta-D-fructose 6-phosphate from D-ribose 5-phosphate and D-xylulose 5-phosphate (non-oxidative stage): step 2/3. Functionally, transaldolase is important for the balance of metabolites in the pentose-phosphate pathway. This chain is Probable transaldolase, found in Chlorobium limicola (strain DSM 245 / NBRC 103803 / 6330).